Here is a 507-residue protein sequence, read N- to C-terminus: ATP synthase subunit alpha, chloroplastic (507 aa).

ATP is bound at residue 170–177 (GDRQTGKT).

This sequence belongs to the ATPase alpha/beta chains family. As to quaternary structure, F-type ATPases have 2 components, CF(1) - the catalytic core - and CF(0) - the membrane proton channel. CF(1) has five subunits: alpha(3), beta(3), gamma(1), delta(1), epsilon(1). CF(0) has four main subunits: a, b, b' and c.

It is found in the plastid. Its subcellular location is the chloroplast thylakoid membrane. It catalyses the reaction ATP + H2O + 4 H(+)(in) = ADP + phosphate + 5 H(+)(out). Produces ATP from ADP in the presence of a proton gradient across the membrane. The alpha chain is a regulatory subunit. The sequence is that of ATP synthase subunit alpha, chloroplastic from Panax ginseng (Korean ginseng).